Here is a 127-residue protein sequence, read N- to C-terminus: Large ribosomal subunit protein bL12 (127 aa).

Belongs to the bacterial ribosomal protein bL12 family. As to quaternary structure, homodimer. Part of the ribosomal stalk of the 50S ribosomal subunit. Forms a multimeric L10(L12)X complex, where L10 forms an elongated spine to which 2 to 4 L12 dimers bind in a sequential fashion. Binds GTP-bound translation factors.

Its function is as follows. Forms part of the ribosomal stalk which helps the ribosome interact with GTP-bound translation factors. Is thus essential for accurate translation. The sequence is that of Large ribosomal subunit protein bL12 from Leptospira interrogans serogroup Icterohaemorrhagiae serovar copenhageni (strain Fiocruz L1-130).